A 94-amino-acid polypeptide reads, in one-letter code: NADH dehydrogenase [ubiquinone] iron-sulfur protein 3, mitochondrial (94 aa).

Belongs to the complex I 30 kDa subunit family. As to quaternary structure, core subunit of respiratory chain NADH dehydrogenase (Complex I) which is composed of 45 different subunits. Interacts with NDUFAF3. Interacts with RAB5IF. Found in subcomplexes containing subunits NDUFS2, MT-ND1 and NDUFA13.

It localises to the mitochondrion inner membrane. The catalysed reaction is a ubiquinone + NADH + 5 H(+)(in) = a ubiquinol + NAD(+) + 4 H(+)(out). In terms of biological role, core subunit of the mitochondrial membrane respiratory chain NADH dehydrogenase (Complex I) which catalyzes electron transfer from NADH through the respiratory chain, using ubiquinone as an electron acceptor. Essential for the catalytic activity and assembly of complex I. In Mesocricetus auratus (Golden hamster), this protein is NADH dehydrogenase [ubiquinone] iron-sulfur protein 3, mitochondrial.